The primary structure comprises 202 residues: uncharacterized protein (202 aa).

Residues 1-20 (MVGAVTQIADRPTDPSPWSP) form a disordered region. In terms of domain architecture, HTH tetR-type spans 19–79 (SPRETELLAV…AAFIEGIRQV (61 aa)).

This is an uncharacterized protein from Mycobacterium bovis (strain ATCC BAA-935 / AF2122/97).